Consider the following 590-residue polypeptide: Methionine--tRNA ligase, mitochondrial (590 aa).

A mitochondrion-targeting transit peptide spans 1–26 (MRTRFLFLTSGCKAVPELHKIVLANA). The 'HIGH' region motif lies at 51–61 (FYVNASPHLGH). The 'KMSKS' region signature appears at 342-346 (KMSKS). Residue lysine 345 coordinates ATP. The tract at residues 570–590 (LESQRADQQKNRKMEKGSNLK) is disordered. The span at 571–590 (ESQRADQQKNRKMEKGSNLK) shows a compositional bias: basic and acidic residues.

It belongs to the class-I aminoacyl-tRNA synthetase family.

The protein resides in the mitochondrion matrix. The catalysed reaction is tRNA(Met) + L-methionine + ATP = L-methionyl-tRNA(Met) + AMP + diphosphate. This Takifugu rubripes (Japanese pufferfish) protein is Methionine--tRNA ligase, mitochondrial (mars2).